A 71-amino-acid chain; its full sequence is Large ribosomal subunit protein bL31 (71 aa).

Zn(2+) is bound by residues Cys16, Cys18, Cys37, and Cys40.

The protein belongs to the bacterial ribosomal protein bL31 family. Type A subfamily. Part of the 50S ribosomal subunit. Zn(2+) serves as cofactor.

In terms of biological role, binds the 23S rRNA. The sequence is that of Large ribosomal subunit protein bL31 from Nitratidesulfovibrio vulgaris (strain DSM 19637 / Miyazaki F) (Desulfovibrio vulgaris).